A 479-amino-acid polypeptide reads, in one-letter code: Adenosylhomocysteinase (479 aa).

Thr-56, Asp-134, and Glu-200 together coordinate substrate. 201–203 lines the NAD(+) pocket; it reads TTT. Residues Lys-230 and Asp-234 each coordinate substrate. Residues Asn-235, 264-269, Glu-287, Asn-322, 343-345, and Asn-391 each bind NAD(+); these read GYGDVG and IGH.

It belongs to the adenosylhomocysteinase family. As to quaternary structure, homotetramer. It depends on NAD(+) as a cofactor.

The catalysed reaction is S-adenosyl-L-homocysteine + H2O = L-homocysteine + adenosine. It participates in amino-acid biosynthesis; L-homocysteine biosynthesis; L-homocysteine from S-adenosyl-L-homocysteine: step 1/1. In terms of biological role, adenosylhomocysteine is a competitive inhibitor of S-adenosyl-L-methionine-dependent methyl transferase reactions; therefore adenosylhomocysteinase may play a key role in the control of methylations via regulation of the intracellular concentration of adenosylhomocysteine. In Plasmodium falciparum (isolate 3D7), this protein is Adenosylhomocysteinase.